The chain runs to 70 residues: DNA-directed RNA polymerase subunit epsilon (70 aa).

This sequence belongs to the RNA polymerase subunit epsilon family. RNAP is composed of a core of 2 alpha, a beta and a beta' subunit. The core is associated with a delta subunit, and at least one of epsilon or omega. When a sigma factor is associated with the core the holoenzyme is formed, which can initiate transcription.

It catalyses the reaction RNA(n) + a ribonucleoside 5'-triphosphate = RNA(n+1) + diphosphate. Its function is as follows. A non-essential component of RNA polymerase (RNAP). The protein is DNA-directed RNA polymerase subunit epsilon of Leuconostoc mesenteroides subsp. mesenteroides (strain ATCC 8293 / DSM 20343 / BCRC 11652 / CCM 1803 / JCM 6124 / NCDO 523 / NBRC 100496 / NCIMB 8023 / NCTC 12954 / NRRL B-1118 / 37Y).